The chain runs to 365 residues: PDZ and LIM domain protein 3 (365 aa).

One can recognise a PDZ domain in the interval 1-84; that stretch reads MPQNVILPGP…QLCLKIDRAE (84 aa). Serine 18 is modified (phosphoserine). The tract at residues 126-156 is disordered; sequence FIIPGRSSGCSTPSGIDGGSGRSTPSSVSTL. Residues 147–156 show a composition bias toward polar residues; sequence RSTPSSVSTL. The LIM zinc-binding domain maps to 293–352; sequence PLCDKCGSGIVGAVVKARDKYRHPECFVCADCNLNLKQKGYFFVEGELYCETHARARMRP.

Interacts with ACTN2. Forms a heterodimer with PDLIM4 (via LIM domain).

The protein resides in the cytoplasm. It localises to the myofibril. The protein localises to the sarcomere. Its subcellular location is the z line. Functionally, may play a role in the organization of actin filament arrays within muscle cells. In Sus scrofa (Pig), this protein is PDZ and LIM domain protein 3 (PDLIM3).